We begin with the raw amino-acid sequence, 564 residues long: Phenylalanine--tRNA ligase beta subunit (564 aa).

A B5 domain is found at 286 to 362; the sequence is YFQNSLKINV…IGKGLDNFKS (77 aa). Residues D340, D346, E349, and E350 each coordinate Mg(2+).

The protein belongs to the phenylalanyl-tRNA synthetase beta subunit family. Type 2 subfamily. In terms of assembly, tetramer of two alpha and two beta subunits. Mg(2+) is required as a cofactor.

It localises to the cytoplasm. The catalysed reaction is tRNA(Phe) + L-phenylalanine + ATP = L-phenylalanyl-tRNA(Phe) + AMP + diphosphate + H(+). In Borrelia duttonii (strain Ly), this protein is Phenylalanine--tRNA ligase beta subunit.